A 209-amino-acid chain; its full sequence is Small ribosomal subunit protein uS4 (209 aa).

The region spanning 99–161 (CRLDNIAFRL…SSKLVVVEMG (63 aa)) is the S4 RNA-binding domain.

Belongs to the universal ribosomal protein uS4 family. As to quaternary structure, part of the 30S ribosomal subunit. Contacts protein S5. The interaction surface between S4 and S5 is involved in control of translational fidelity.

One of the primary rRNA binding proteins, it binds directly to 16S rRNA where it nucleates assembly of the body of the 30S subunit. Functionally, with S5 and S12 plays an important role in translational accuracy. The polypeptide is Small ribosomal subunit protein uS4 (Acidobacterium capsulatum (strain ATCC 51196 / DSM 11244 / BCRC 80197 / JCM 7670 / NBRC 15755 / NCIMB 13165 / 161)).